A 309-amino-acid polypeptide reads, in one-letter code: Prephenate dehydratase (309 aa).

Residues 3 to 191 form the Prephenate dehydratase domain; that stretch reads GIAYLGPEGT…ARTRFVLVGC (189 aa). The ACT domain occupies 205–282; the sequence is SVVLRLDNVP…ADVRYLGSWP (78 aa).

As to quaternary structure, homodimer.

It carries out the reaction prephenate + H(+) = 3-phenylpyruvate + CO2 + H2O. The protein operates within amino-acid biosynthesis; L-phenylalanine biosynthesis; phenylpyruvate from prephenate: step 1/1. The protein is Prephenate dehydratase (pheA) of Mycolicibacterium gilvum (strain PYR-GCK) (Mycobacterium gilvum (strain PYR-GCK)).